We begin with the raw amino-acid sequence, 387 residues long: Hydroxycarboxylic acid receptor 3 (387 aa).

Over 1-28 (MNRHHLQDHFLEIDKKNCCVFRDDFIAK) the chain is Extracellular. Residues 29–50 (VLPPVLGLEFIFGLLGNGLALW) form a helical membrane-spanning segment. At 51 to 63 (IFCFHLKSWKSSR) the chain is on the cytoplasmic side. The chain crosses the membrane as a helical span at residues 64–85 (IFLFNLAVADFLLIICLPFVMD). The Extracellular segment spans residues 86-102 (YYVRRSDWKFGDIPCRL). Cysteine 100 and cysteine 177 are oxidised to a cystine. Residues 103 to 123 (VLFMFAMNRQGSIIFLTVVAV) traverse the membrane as a helical segment. Over 124–142 (DRYFRVVHPHHALNKISNW) the chain is Cytoplasmic. Residues 143-163 (TAAIISCLLWGITVGLTVHLL) traverse the membrane as a helical segment. The Extracellular segment spans residues 164-194 (KKKLLIQNGTANVCISFSICHTFRWHEAMFL). The helical transmembrane segment at 195–209 (LEFFLPLGIILFCSA) threads the bilayer. The Cytoplasmic segment spans residues 210-236 (RIIWSLRQRQMDRHAKIKRAITFIMVV). A helical membrane pass occupies residues 237–256 (AIVFVICFLPSVVVRIHIFW). Over 257-273 (LLHTSGTQNCEVYRSVD) the chain is Extracellular. Residues 274 to 298 (LAFFITLSFTYMNSMLDPVVYYFSS) traverse the membrane as a helical segment. The Cytoplasmic portion of the chain corresponds to 299–387 (PSFPNFFSTL…LEKQLGCCIE (89 aa)). The segment at 319–343 (GEPDNNRSTSVELTGDPNKTRGAPE) is disordered.

The protein belongs to the G-protein coupled receptor 1 family. In terms of tissue distribution, expression largely restricted to adipose tissue and spleen.

It is found in the cell membrane. Functionally, receptor for 3-OH-octanoid acid mediates a negative feedback regulation of adipocyte lipolysis to counteract prolipolytic influences under conditions of physiological or pathological increases in beta-oxidation rates. Acts as a low affinity receptor for nicotinic acid. This pharmacological effect requires nicotinic acid doses that are much higher than those provided by a normal diet. The protein is Hydroxycarboxylic acid receptor 3 (HCAR3) of Homo sapiens (Human).